The following is a 403-amino-acid chain: D-galactonate dehydratase family member Mmwyl1_0037 (403 aa).

Asn-37 and His-122 together coordinate substrate. The active-site Proton donor/acceptor is the Tyr-159. Asp-211 contributes to the Mg(2+) binding site. His-213 acts as the Proton donor/acceptor in catalysis. Residues Glu-237 and Glu-263 each coordinate Mg(2+). Residues Glu-263, Arg-284, His-313, Asp-317, and Glu-340 each coordinate substrate.

This sequence belongs to the mandelate racemase/muconate lactonizing enzyme family. GalD subfamily. It depends on Mg(2+) as a cofactor.

The catalysed reaction is D-mannonate = 2-dehydro-3-deoxy-D-gluconate + H2O. Functionally, has low D-mannonate dehydratase activity (in vitro), suggesting that this is not a physiological substrate and that it has no significant role in D-mannonate degradation in vivo. Has no detectable activity with a panel of 70 other acid sugars (in vitro). In Marinomonas sp. (strain MWYL1), this protein is D-galactonate dehydratase family member Mmwyl1_0037.